A 692-amino-acid chain; its full sequence is Putative receptor-like protein kinase At1g80870 (692 aa).

Residues 20–40 (LFLILTISSSLVIFFAILYFI) form a helical membrane-spanning segment. The 593-residue stretch at 81–673 (FDESNVIGKG…GEMDISSTAF (593 aa)) folds into the Protein kinase domain. ATP is bound by residues 87 to 95 (IGKGGSGTV) and Lys-109. Catalysis depends on Asp-206, which acts as the Proton acceptor. Disordered regions lie at residues 427-446 (EISERKNKRSKNKKKKHRNM) and 511-533 (RRKSNSSSKKKKKNNNGSMGSEM). 2 stretches are compositionally biased toward basic residues: residues 432 to 444 (KNKRSKNKKKKHR) and 511 to 524 (RRKSNSSSKKKKKN).

This sequence belongs to the protein kinase superfamily. Ser/Thr protein kinase family.

The protein localises to the cell membrane. It catalyses the reaction L-seryl-[protein] + ATP = O-phospho-L-seryl-[protein] + ADP + H(+). It carries out the reaction L-threonyl-[protein] + ATP = O-phospho-L-threonyl-[protein] + ADP + H(+). This chain is Putative receptor-like protein kinase At1g80870, found in Arabidopsis thaliana (Mouse-ear cress).